Consider the following 294-residue polypeptide: ATP synthase gamma chain (294 aa).

Belongs to the ATPase gamma chain family. F-type ATPases have 2 components, CF(1) - the catalytic core - and CF(0) - the membrane proton channel. CF(1) has five subunits: alpha(3), beta(3), gamma(1), delta(1), epsilon(1). CF(0) has three main subunits: a, b and c.

The protein resides in the cell inner membrane. Its function is as follows. Produces ATP from ADP in the presence of a proton gradient across the membrane. The gamma chain is believed to be important in regulating ATPase activity and the flow of protons through the CF(0) complex. The chain is ATP synthase gamma chain from Nitrosomonas europaea (strain ATCC 19718 / CIP 103999 / KCTC 2705 / NBRC 14298).